Consider the following 425-residue polypeptide: Glutamyl-tRNA reductase (425 aa).

Residues Thr49 to Arg52, Ser107, Glu112 to Gln114, and Gln118 contribute to the substrate site. Catalysis depends on Cys50, which acts as the Nucleophile. Gly187–Ile192 contacts NADP(+).

Belongs to the glutamyl-tRNA reductase family. Homodimer.

It carries out the reaction (S)-4-amino-5-oxopentanoate + tRNA(Glu) + NADP(+) = L-glutamyl-tRNA(Glu) + NADPH + H(+). It functions in the pathway porphyrin-containing compound metabolism; protoporphyrin-IX biosynthesis; 5-aminolevulinate from L-glutamyl-tRNA(Glu): step 1/2. Catalyzes the NADPH-dependent reduction of glutamyl-tRNA(Glu) to glutamate 1-semialdehyde (GSA). This chain is Glutamyl-tRNA reductase, found in Pseudomonas putida (strain GB-1).